Consider the following 414-residue polypeptide: Mini-circle putative transposase for IS117 (414 aa).

This chain is Mini-circle putative transposase for IS117, found in Streptomyces coelicolor (strain ATCC BAA-471 / A3(2) / M145).